The chain runs to 432 residues: Testis-specific Y-encoded-like protein 1 (432 aa).

3 disordered regions span residues 1-31 (MSGRDGGERTPLLEAHSLTTSDCAAGAPDPS), 54-110 (ALPP…LETA), and 116-135 (TDDSLGNGCQPGEPQGLSRE). Lys-160 participates in a covalent cross-link: Glycyl lysine isopeptide (Lys-Gly) (interchain with G-Cter in SUMO2).

Belongs to the nucleosome assembly protein (NAP) family. Ubiquitinated by the CRL2(APPBP2) complex, which recognizes the Arg-Xaa-Xaa-Gly sequence at the C-terminus, leading to its degradation.

Its subcellular location is the nucleus. It localises to the nucleolus. The polypeptide is Testis-specific Y-encoded-like protein 1 (TSPYL1) (Bos taurus (Bovine)).